The sequence spans 1744 residues: Transcription initiation factor TFIID subunit 1 (1744 aa).

Disordered regions lie at residues 1–65, 248–275, 429–488, 1001–1024, 1071–1098, and 1186–1213; these read MNNT…EKNE, VSIRSGKPLNYRTPDDLPSTSSGPAPNS, PEDR…DNDP, QNQTLANTDPISTDDDSTDADSDN, TTNQVEKGEKKEEGEVTAEEKKSASQFG, and MKKNEEKAAHKVQKMTEKKVKPIKPPNP. A compositionally biased stretch (polar residues) spans 43-52; sequence ACSSASNGGS. Over residues 55 to 64 the composition is skewed to basic and acidic residues; sequence VKMEPKVEKN. Positions 429–439 are enriched in basic and acidic residues; sequence PEDRRHDEGPD. The span at 440–449 shows a compositional bias: basic residues; sequence HHHHHHHHRK. A compositionally biased stretch (polar residues) spans 477 to 488; the sequence is ESTMAQFTDNDP. Residues 1012–1024 are compositionally biased toward acidic residues; sequence STDDDSTDADSDN. Coiled coils occupy residues 1019–1080, 1161–1204, and 1282–1314; these read DADS…KGEK, YAQM…TEKK, and NFAEIRKEQNREEKLKRKLAKMAEAAVRERQMA. Basic and acidic residues-rich tracts occupy residues 1076-1093 and 1186-1205; these read EKGEKKEEGEVTAEEKKS and MKKNEEKAAHKVQKMTEKKV. Over residues 1319-1344 the composition is skewed to gly residues; that stretch reads YGGGASSSGGAGGGGSGIGGSTGGGI. Positions 1319–1391 are disordered; sequence YGGGASSSGG…SKRRSSMMPE (73 aa). The segment covering 1354 to 1363 has biased composition (polar residues); the sequence is SQISGTSSFL. Residues 1372–1381 show a composition bias toward low complexity; that stretch reads GGNRNSSVSG. Residues 1379–1386 carry the Nuclear localization signal motif; it reads VSGSKRRS. Bromo domains lie at 1404–1512 and 1537–1634; these read RARA…MIER and YLLG…VKDQ. Residues 1666–1694 are compositionally biased toward acidic residues; sequence DHMDEMEDHPTEEEEEDDDDEIMDDDMDI. 2 disordered regions span residues 1666–1702 and 1714–1744; these read DHMDEMEDHPTEEEEEDDDDEIMDDDMDIDATGYSYD and NDLAMSDSDEDERAEDVKRPANGDDNLLDSF.

This sequence belongs to the TAF1 family. In terms of assembly, component of the TFIID basal transcription factor complex, composed of TATA-box-binding protein tbp-1, and a number of TBP-associated factors (TAFs).

It localises to the nucleus. The TFIID basal transcription factor complex plays a major role in the initiation of RNA polymerase II (Pol II)-dependent transcription. TFIID recognizes and binds promoters via its subunit tbp-1, a TATA-box-binding protein, and promotes assembly of the pre-initiation complex (PIC). The TFIID complex consists of tbp-1 and TBP-associated factors (TAFs), including taf-1. May regulate RNA polymerase II activity and thereby may control transcription initiation by RNA polymerase II. Required for early embryonic development. Essential for embryonic transcription of several genes. The chain is Transcription initiation factor TFIID subunit 1 from Caenorhabditis elegans.